We begin with the raw amino-acid sequence, 946 residues long: Histone-lysine N-methyltransferase, H3 lysine-79 specific (946 aa).

Over residues 1–18 (MSEADAGARDESPSRTAE) the composition is skewed to basic and acidic residues. Residues 1–28 (MSEADAGARDESPSRTAEEPAAAMRIKE) form a disordered region. The 316-residue stretch at 54-369 (QGKTLRLPGN…KLIKYYEDQR (316 aa)) folds into the DOT1 domain. Residues 173–176 (YGET), 196–205 (FVDLGSGIGQ), Glu223, and 259–260 (DF) each bind S-adenosyl-L-methionine. Residues 368 to 409 (QRRRQEVKSSREGSEISDGRDMGLKKRKSQRESSVHPDKLQK) are compositionally biased toward basic and acidic residues. Disordered regions lie at residues 368–577 (QRRR…HGGG) and 849–905 (PTAS…GATE). Polar residues predominate over residues 410 to 422 (TEQAAASSHQSPK). A compositionally biased stretch (basic and acidic residues) spans 464–484 (GKDREKEKEKKKNKIYEEKKV). Low complexity-rich tracts occupy residues 491-502 (KSSSSRYSSETP), 512-528 (NSIS…QPKA), and 855-864 (SKVSPSSSSS). The span at 880–903 (GAGGGGKRGTSGGRKSDGGGGGGA) shows a compositional bias: gly residues.

Belongs to the class I-like SAM-binding methyltransferase superfamily. DOT1 family. Interacts with zfp-1 (via C-terminus) to form a heterodimer known as the zfp-1-dot-1.1 complex or DotCom complex.

It is found in the nucleus. The protein localises to the chromosome. It carries out the reaction L-lysyl(79)-[histone H3] + 3 S-adenosyl-L-methionine = N(6),N(6),N(6)-trimethyl-L-lysyl(79)-[histone H3] + 3 S-adenosyl-L-homocysteine + 3 H(+). In terms of biological role, histone methyltransferase, which in complex with zfp-1, methylates 'Lys-79' of histone H3 to activate transcription. During stress, the zfp-1-dot-1.1 complex also plays a role in the deubiquitination of histone H2B sites, which negatively modulates the RNA polymerase II-induced transcription of highly expressed genes. Involved in controlling tissue-specific gene expression, particularly in the epidermis. This Caenorhabditis elegans protein is Histone-lysine N-methyltransferase, H3 lysine-79 specific.